A 299-amino-acid chain; its full sequence is Ribosomal RNA small subunit methyltransferase H (299 aa).

S-adenosyl-L-methionine contacts are provided by residues 36 to 38, aspartate 55, tyrosine 82, aspartate 103, and glutamine 110; that span reads GGH. Basic and acidic residues-rich tracts occupy residues 269 to 282 and 289 to 299; these read PVRPSEEEIRENPR and RAAERIEEGGD. Residues 269–299 are disordered; sequence PVRPSEEEIRENPRARSGRLRAAERIEEGGD.

This sequence belongs to the methyltransferase superfamily. RsmH family.

The protein resides in the cytoplasm. The enzyme catalyses cytidine(1402) in 16S rRNA + S-adenosyl-L-methionine = N(4)-methylcytidine(1402) in 16S rRNA + S-adenosyl-L-homocysteine + H(+). Its function is as follows. Specifically methylates the N4 position of cytidine in position 1402 (C1402) of 16S rRNA. The chain is Ribosomal RNA small subunit methyltransferase H from Thermotoga maritima (strain ATCC 43589 / DSM 3109 / JCM 10099 / NBRC 100826 / MSB8).